We begin with the raw amino-acid sequence, 748 residues long: Far upstream element-binding protein 2 (748 aa).

The segment at 1 to 78 is disordered; it reads MSDYNTGGPP…GIRKDAFADA (78 aa). Ser2 is subject to N-acetylserine. Residues 8–17 are compositionally biased toward pro residues; sequence GPPPGPPPPA. Composition is skewed to gly residues over residues 18–28 and 36–69; these read GGGGGAAGAGG and GAGDRGGGGPGGGGPGGGGASGGPSQPPGGGGPG. Arg40 is subject to Omega-N-methylarginine. The residue at position 88 (Lys88) is an N6-acetyllysine. The interval 90–148 is disordered; it reads GGDAATTVNNNTPDFGFGGQKRQLEDGDQPDSKKLASQGDSIGSQLGPIHPPPRTSMTE. Position 101 is a phosphothreonine (Thr101). Basic and acidic residues predominate over residues 111–123; it reads RQLEDGDQPDSKK. Residue Lys122 forms a Glycyl lysine isopeptide (Lys-Gly) (interchain with G-Cter in SUMO1); alternate linkage. Residue Lys122 forms a Glycyl lysine isopeptide (Lys-Gly) (interchain with G-Cter in SUMO2); alternate linkage. Ser126, Ser130, Ser182, Ser185, Ser194, and Ser275 each carry phosphoserine. KH domains lie at 145 to 209, 234 to 300, and 323 to 387; these read SMTE…KMML, GTVQ…CEMV, and GGGI…ARII. Residues 394 to 422 are disordered; the sequence is LRSGPPGPPGAPGMPPGGRGRGRGQGNWG. Positions 398-408 are enriched in pro residues; the sequence is PPGPPGAPGMP. Residues 409-422 are compositionally biased toward gly residues; it reads PGGRGRGRGQGNWG. 4 positions are modified to omega-N-methylarginine: Arg412, Arg414, Arg416, and Arg443. The KH 4 domain occupies 425 to 492; it reads GGEMTFSIPT…QQIDHAKQLI (68 aa). Ser481 is subject to Phosphoserine. Residues 498–570 form a disordered region; it reads GPLCPVGPGP…HDPNKAAAAA (73 aa). 2 stretches are compositionally biased toward pro residues: residues 502–521 and 529–543; these read PVGPGPGGPGPAGPMGPFNP and PGAPPHAGGPPPHQY. Residues 572–583 form repeat 1; sequence DPNAAWAAYYSH. The segment at 572–685 is 4 X 12 AA imperfect repeats; sequence DPNAAWAAYY…SAAWAEYYRQ (114 aa). Residues 588–614 show a composition bias toward pro residues; sequence PPGPVPGPAPAPAAPPAQGEPPQPPPT. Disordered regions lie at residues 588-650, 659-678, and 689-735; these read PPGP…KAWE, VATGGGPGAPPGSQPDYSAA, and YYGQ…PALV. Repeat copies occupy residues 618–629, 644–655, and 674–685.

It belongs to the KHSRP family. In terms of assembly, part of a ternary complex containing FUBP2, PTBP1, PTBP2 and HNRPH1. Interacts with PARN. Interacts with PQBP1.

It is found in the nucleus. The protein resides in the cytoplasm. Binds to the dendritic targeting element and may play a role in mRNA trafficking. Part of a ternary complex that binds to the downstream control sequence (DCS) of the pre-mRNA. Mediates exon inclusion in transcripts that are subject to tissue-specific alternative splicing. May interact with single-stranded DNA from the far-upstream element (FUSE). May activate gene expression. Also involved in degradation of inherently unstable mRNAs that contain AU-rich elements (AREs) in their 3'-UTR, possibly by recruiting degradation machinery to ARE-containing mRNAs. This chain is Far upstream element-binding protein 2 (Khsrp), found in Mus musculus (Mouse).